Here is a 127-residue protein sequence, read N- to C-terminus: Large ribosomal subunit protein bL20 (127 aa).

Belongs to the bacterial ribosomal protein bL20 family.

Its function is as follows. Binds directly to 23S ribosomal RNA and is necessary for the in vitro assembly process of the 50S ribosomal subunit. It is not involved in the protein synthesizing functions of that subunit. The polypeptide is Large ribosomal subunit protein bL20 (Bifidobacterium adolescentis (strain ATCC 15703 / DSM 20083 / NCTC 11814 / E194a)).